The sequence spans 122 residues: Fluoride-specific ion channel FluC (122 aa).

The next 4 helical transmembrane spans lie at 4-24 (ILLIGLGGFFGAILRYLVSGI), 36-56 (LIVNLLGSFIIGFLIYSSLFG), 65-85 (FIITGFCGALTTFSTFSYESF), and 100-120 (ILLNVFGCLGMVYLGRLASMF). Na(+) contacts are provided by glycine 72 and threonine 75.

Belongs to the fluoride channel Fluc/FEX (TC 1.A.43) family.

It localises to the cell membrane. The catalysed reaction is fluoride(in) = fluoride(out). Na(+) is not transported, but it plays an essential structural role and its presence is essential for fluoride channel function. Its function is as follows. Fluoride-specific ion channel. Important for reducing fluoride concentration in the cell, thus reducing its toxicity. The protein is Fluoride-specific ion channel FluC of Methanococcus maripaludis (strain DSM 14266 / JCM 13030 / NBRC 101832 / S2 / LL).